A 284-amino-acid chain; its full sequence is Bifunctional protein FolD 1 (284 aa).

NADP(+) contacts are provided by residues 166–168 (GAS) and isoleucine 232.

It belongs to the tetrahydrofolate dehydrogenase/cyclohydrolase family. In terms of assembly, homodimer.

It carries out the reaction (6R)-5,10-methylene-5,6,7,8-tetrahydrofolate + NADP(+) = (6R)-5,10-methenyltetrahydrofolate + NADPH. The catalysed reaction is (6R)-5,10-methenyltetrahydrofolate + H2O = (6R)-10-formyltetrahydrofolate + H(+). It functions in the pathway one-carbon metabolism; tetrahydrofolate interconversion. Catalyzes the oxidation of 5,10-methylenetetrahydrofolate to 5,10-methenyltetrahydrofolate and then the hydrolysis of 5,10-methenyltetrahydrofolate to 10-formyltetrahydrofolate. In Ectopseudomonas mendocina (strain ymp) (Pseudomonas mendocina), this protein is Bifunctional protein FolD 1.